We begin with the raw amino-acid sequence, 207 residues long: Small ribosomal subunit protein uS4 (207 aa).

Residues 30–54 (DKCKLDSKPGQHGRTSGARTSDYGN) are disordered. Residues 42-53 (GRTSGARTSDYG) are compositionally biased toward polar residues. One can recognise an S4 RNA-binding domain in the interval 97-160 (SRLDNVVYRM…KKQVRIAEAL (64 aa)).

This sequence belongs to the universal ribosomal protein uS4 family. Part of the 30S ribosomal subunit. Contacts protein S5. The interaction surface between S4 and S5 is involved in control of translational fidelity.

Functionally, one of the primary rRNA binding proteins, it binds directly to 16S rRNA where it nucleates assembly of the body of the 30S subunit. In terms of biological role, with S5 and S12 plays an important role in translational accuracy. The chain is Small ribosomal subunit protein uS4 from Cupriavidus taiwanensis (strain DSM 17343 / BCRC 17206 / CCUG 44338 / CIP 107171 / LMG 19424 / R1) (Ralstonia taiwanensis (strain LMG 19424)).